The following is a 345-amino-acid chain: Phosphoribosylformylglycinamidine cyclo-ligase (345 aa).

It belongs to the AIR synthase family.

It is found in the cytoplasm. The enzyme catalyses 2-formamido-N(1)-(5-O-phospho-beta-D-ribosyl)acetamidine + ATP = 5-amino-1-(5-phospho-beta-D-ribosyl)imidazole + ADP + phosphate + H(+). Its pathway is purine metabolism; IMP biosynthesis via de novo pathway; 5-amino-1-(5-phospho-D-ribosyl)imidazole from N(2)-formyl-N(1)-(5-phospho-D-ribosyl)glycinamide: step 2/2. The protein is Phosphoribosylformylglycinamidine cyclo-ligase of Sodalis glossinidius (strain morsitans).